The sequence spans 230 residues: Chalcone--flavanone isomerase (230 aa).

Residues T52, N117, and S194 each contribute to the substrate site.

This sequence belongs to the chalcone isomerase family.

The enzyme catalyses a chalcone = a flavanone.. Its pathway is secondary metabolite biosynthesis; flavonoid biosynthesis. Functionally, catalyzes the intramolecular cyclization of bicyclic chalcones into tricyclic (S)-flavanones. Responsible for the isomerization of 4,2',4',6'-tetrahydroxychalcone (also termed chalcone) into naringenin. This is Chalcone--flavanone isomerase (CHI) from Camellia sinensis (Tea plant).